The primary structure comprises 693 residues: Elongation factor G (693 aa).

Positions Glu8–Thr282 constitute a tr-type G domain. Residues Ala17–Thr24, Asp81–His85, and Asn135–Asp138 contribute to the GTP site.

This sequence belongs to the TRAFAC class translation factor GTPase superfamily. Classic translation factor GTPase family. EF-G/EF-2 subfamily.

The protein localises to the cytoplasm. Its function is as follows. Catalyzes the GTP-dependent ribosomal translocation step during translation elongation. During this step, the ribosome changes from the pre-translocational (PRE) to the post-translocational (POST) state as the newly formed A-site-bound peptidyl-tRNA and P-site-bound deacylated tRNA move to the P and E sites, respectively. Catalyzes the coordinated movement of the two tRNA molecules, the mRNA and conformational changes in the ribosome. This is Elongation factor G from Ruminiclostridium cellulolyticum (strain ATCC 35319 / DSM 5812 / JCM 6584 / H10) (Clostridium cellulolyticum).